Here is a 253-residue protein sequence, read N- to C-terminus: 3-deoxy-manno-octulosonate cytidylyltransferase (253 aa).

This sequence belongs to the KdsB family.

The protein localises to the cytoplasm. It carries out the reaction 3-deoxy-alpha-D-manno-oct-2-ulosonate + CTP = CMP-3-deoxy-beta-D-manno-octulosonate + diphosphate. It participates in nucleotide-sugar biosynthesis; CMP-3-deoxy-D-manno-octulosonate biosynthesis; CMP-3-deoxy-D-manno-octulosonate from 3-deoxy-D-manno-octulosonate and CTP: step 1/1. The protein operates within bacterial outer membrane biogenesis; lipopolysaccharide biosynthesis. Its function is as follows. Activates KDO (a required 8-carbon sugar) for incorporation into bacterial lipopolysaccharide in Gram-negative bacteria. This is 3-deoxy-manno-octulosonate cytidylyltransferase from Neisseria meningitidis serogroup C (strain 053442).